The following is a 77-amino-acid chain: Defensin-like protein 91 (77 aa).

The signal sequence occupies residues 1–27 (METKKISYFLLPSLMIVALIFQPMCSA). 4 disulfide bridges follow: cysteine 38-cysteine 75, cysteine 43-cysteine 64, cysteine 49-cysteine 73, and cysteine 53-cysteine 74.

Belongs to the DEFL family.

The protein localises to the secreted. The sequence is that of Defensin-like protein 91 (LCR47) from Arabidopsis thaliana (Mouse-ear cress).